Here is a 363-residue protein sequence, read N- to C-terminus: Chorismate synthase (363 aa).

The tract at residues 36–58 (SESDIQGDLDRRRPGQSKITTPR) is disordered. NADP(+) is bound at residue Arg-47. FMN is bound by residues 124 to 126 (RSS), Gly-286, 301 to 305 (KPTAT), and Arg-327.

Belongs to the chorismate synthase family. As to quaternary structure, homotetramer. It depends on FMNH2 as a cofactor.

It carries out the reaction 5-O-(1-carboxyvinyl)-3-phosphoshikimate = chorismate + phosphate. It participates in metabolic intermediate biosynthesis; chorismate biosynthesis; chorismate from D-erythrose 4-phosphate and phosphoenolpyruvate: step 7/7. Its function is as follows. Catalyzes the anti-1,4-elimination of the C-3 phosphate and the C-6 proR hydrogen from 5-enolpyruvylshikimate-3-phosphate (EPSP) to yield chorismate, which is the branch point compound that serves as the starting substrate for the three terminal pathways of aromatic amino acid biosynthesis. This reaction introduces a second double bond into the aromatic ring system. This is Chorismate synthase from Crocosphaera subtropica (strain ATCC 51142 / BH68) (Cyanothece sp. (strain ATCC 51142)).